The chain runs to 220 residues: 7-cyano-7-deazaguanine synthase (220 aa).

Residue Phe-10–Leu-20 participates in ATP binding. 4 residues coordinate Zn(2+): Cys-186, Cys-195, Cys-198, and Cys-201.

It belongs to the QueC family. As to quaternary structure, homodimer. It depends on Zn(2+) as a cofactor.

It catalyses the reaction 7-carboxy-7-deazaguanine + NH4(+) + ATP = 7-cyano-7-deazaguanine + ADP + phosphate + H2O + H(+). Its pathway is purine metabolism; 7-cyano-7-deazaguanine biosynthesis. Its function is as follows. Catalyzes the ATP-dependent conversion of 7-carboxy-7-deazaguanine (CDG) to 7-cyano-7-deazaguanine (preQ(0)). The protein is 7-cyano-7-deazaguanine synthase of Bacillus mycoides (strain KBAB4) (Bacillus weihenstephanensis).